Consider the following 96-residue polypeptide: Aspartyl/glutamyl-tRNA(Asn/Gln) amidotransferase subunit C (96 aa).

The protein belongs to the GatC family. As to quaternary structure, heterotrimer of A, B and C subunits.

It catalyses the reaction L-glutamyl-tRNA(Gln) + L-glutamine + ATP + H2O = L-glutaminyl-tRNA(Gln) + L-glutamate + ADP + phosphate + H(+). The catalysed reaction is L-aspartyl-tRNA(Asn) + L-glutamine + ATP + H2O = L-asparaginyl-tRNA(Asn) + L-glutamate + ADP + phosphate + 2 H(+). Its function is as follows. Allows the formation of correctly charged Asn-tRNA(Asn) or Gln-tRNA(Gln) through the transamidation of misacylated Asp-tRNA(Asn) or Glu-tRNA(Gln) in organisms which lack either or both of asparaginyl-tRNA or glutaminyl-tRNA synthetases. The reaction takes place in the presence of glutamine and ATP through an activated phospho-Asp-tRNA(Asn) or phospho-Glu-tRNA(Gln). The polypeptide is Aspartyl/glutamyl-tRNA(Asn/Gln) amidotransferase subunit C (Trichormus variabilis (strain ATCC 29413 / PCC 7937) (Anabaena variabilis)).